The following is a 1165-amino-acid chain: Activity-dependent neuroprotector homeobox protein 2 (1165 aa).

The C2H2-type 1 zinc finger occupies 73 to 96; that stretch reads YCCSLCRYSTKVLTSLKNHLHRYH. Residues 106–128 form a C2H2-type 2; degenerate zinc finger; the sequence is IPCPNCPFSSQPRVVGKHFRMFH. Lys-146 participates in a covalent cross-link: Glycyl lysine isopeptide (Lys-Gly) (interchain with G-Cter in SUMO2). The segment at 155–178 adopts a C2H2-type 3; degenerate zinc-finger fold; sequence FTCLKCNFSNTLYYSMKKHVLVAH. A C2H2-type 4 zinc finger spans residues 215 to 240; the sequence is YYCKKCSAIASSQDALMYHILTSDAH. Low complexity predominate over residues 303–318; the sequence is SGTVQSVTVTPGTSGS. The interval 303–327 is disordered; that stretch reads SGTVQSVTVTPGTSGSLTHSPPTTA. The segment at 696–718 adopts a C2H2-type 5; degenerate zinc-finger fold; the sequence is KTCPVCNELFPSNVYQVHMEVAH. The C2H2-type 6; degenerate zinc-finger motif lies at 724–746; sequence QLCQVCNELFPANVYQVHMEVAH. A C2H2-type 7; degenerate zinc finger spans residues 777 to 798; the sequence is VRCLSCKCLVSQEELMHHLLMH. 2 C2H2-type zinc fingers span residues 800–823 and 905–935; these read LGCLFCPCTFHDVRGLVEHSRTKH and LTCPFCLSTFMTADAYELHLKERHHVMPTVH. Residues 1005–1068 are disordered; that stretch reads PVKRKLPEGH…SGPSEDSLQA (64 aa). Residues Lys-1009 and Lys-1048 each participate in a glycyl lysine isopeptide (Lys-Gly) (interchain with G-Cter in SUMO2) cross-link. Residues 1009-1024 show a composition bias toward basic and acidic residues; that stretch reads KLPEGHLGPEDQRDGE. Positions 1090–1132 form a DNA-binding region, homeobox; the sequence is DYFHRRPYPSRKEVELLSSLLWVWKIDVASFFGKRRYICMKAI.

This sequence belongs to the krueppel C2H2-type zinc-finger protein family. As to quaternary structure, may interact with SMARCA4/BRG1. In terms of tissue distribution, expressed widely, with the highest level in the brain.

It localises to the nucleus. Functionally, may be involved in transcriptional regulation. May play a role in neuronal function; perhaps involved in protection of brain tissues from oxidative stress. May be involved in erythroid differentiation. This chain is Activity-dependent neuroprotector homeobox protein 2 (Adnp2), found in Mus musculus (Mouse).